We begin with the raw amino-acid sequence, 490 residues long: Dual specificity protein kinase CLK3 (490 aa).

Residues 1–138 (MHHCKRYRSP…SKRSSRSVED (138 aa)) form a disordered region. Residue Tyr7 is modified to Phosphotyrosine. Ser9, Ser49, Ser51, Ser67, Ser76, and Ser78 each carry phosphoserine. Basic and acidic residues-rich tracts occupy residues 26-56 (YSREHEGRLRYPSRREPPPRRSRSRSHDRLP) and 63-76 (ERRDSDTYRCEERS). Positions 88 to 116 (RSRHRRRSRERGPYRTRKHAHHCHKRRTR) are enriched in basic residues. The span at 117 to 130 (SCSSASSRSQQSSK) shows a compositional bias: low complexity. At Ser135 the chain carries Phosphoserine. In terms of domain architecture, Protein kinase spans 156 to 472 (YEIVGNLGEG…LAEALLHPFF (317 aa)). ATP-binding positions include 162–170 (LGEGTFGKV) and Lys186. Residue Asp283 is the Proton acceptor of the active site.

This sequence belongs to the protein kinase superfamily. CMGC Ser/Thr protein kinase family. Lammer subfamily. In terms of processing, autophosphorylates on all three types of residues. In terms of tissue distribution, endothelial cells.

The protein resides in the nucleus. It localises to the cytoplasm. The protein localises to the cytoplasmic vesicle. It is found in the secretory vesicle. Its subcellular location is the acrosome. The protein resides in the nucleus speckle. It carries out the reaction L-seryl-[protein] + ATP = O-phospho-L-seryl-[protein] + ADP + H(+). The catalysed reaction is L-threonyl-[protein] + ATP = O-phospho-L-threonyl-[protein] + ADP + H(+). The enzyme catalyses L-tyrosyl-[protein] + ATP = O-phospho-L-tyrosyl-[protein] + ADP + H(+). Its activity is regulated as follows. Leucettine L41 inhibits its kinase activity and affects the regulation of alternative splicing mediated by phosphorylation of SR proteins. In terms of biological role, dual specificity kinase acting on both serine/threonine and tyrosine-containing substrates. Phosphorylates serine- and arginine-rich (SR) proteins of the spliceosomal complex. May be a constituent of a network of regulatory mechanisms that enable SR proteins to control RNA splicing and can cause redistribution of SR proteins from speckles to a diffuse nucleoplasmic distribution. Phosphorylates SRSF1 and SRSF3. Regulates the alternative splicing of tissue factor (F3) pre-mRNA in endothelial cells. This Homo sapiens (Human) protein is Dual specificity protein kinase CLK3.